A 206-amino-acid polypeptide reads, in one-letter code: LexA repressor (206 aa).

The H-T-H motif DNA-binding region spans 28–48 (RAEIARRLGFKSANAAEEHLK). Residues Ser123 and Lys160 each act as for autocatalytic cleavage activity in the active site.

Belongs to the peptidase S24 family. In terms of assembly, homodimer.

It catalyses the reaction Hydrolysis of Ala-|-Gly bond in repressor LexA.. Its function is as follows. Represses a number of genes involved in the response to DNA damage (SOS response), including recA and lexA. In the presence of single-stranded DNA, RecA interacts with LexA causing an autocatalytic cleavage which disrupts the DNA-binding part of LexA, leading to derepression of the SOS regulon and eventually DNA repair. In Shewanella pealeana (strain ATCC 700345 / ANG-SQ1), this protein is LexA repressor.